The following is a 192-amino-acid chain: Phosphoheptose isomerase (192 aa).

The SIS domain occupies 37-192 (LADSFKAGGK…IQLIEKEMVK (156 aa)). Position 52 to 54 (52 to 54 (NGG)) interacts with substrate. His61 and Glu65 together coordinate Zn(2+). Substrate is bound by residues Glu65, 93–94 (ND), 119–121 (STS), Ser124, and Gln172. Positions 172 and 180 each coordinate Zn(2+).

The protein belongs to the SIS family. GmhA subfamily. In terms of assembly, homotetramer. The cofactor is Zn(2+).

The protein resides in the cytoplasm. It catalyses the reaction 2 D-sedoheptulose 7-phosphate = D-glycero-alpha-D-manno-heptose 7-phosphate + D-glycero-beta-D-manno-heptose 7-phosphate. Its pathway is carbohydrate biosynthesis; D-glycero-D-manno-heptose 7-phosphate biosynthesis; D-glycero-alpha-D-manno-heptose 7-phosphate and D-glycero-beta-D-manno-heptose 7-phosphate from sedoheptulose 7-phosphate: step 1/1. In terms of biological role, catalyzes the isomerization of sedoheptulose 7-phosphate in D-glycero-D-manno-heptose 7-phosphate. In Salmonella agona (strain SL483), this protein is Phosphoheptose isomerase.